Here is a 1406-residue protein sequence, read N- to C-terminus: EF-hand calcium-binding domain-containing protein 5 (1406 aa).

Residues 255–655 (NKDLPQQQRD…KACEPKPQHV (401 aa)) form a disordered region. Composition is skewed to polar residues over residues 258-294 (LPQQ…SLTG), 322-334 (RRSS…QQRG), 342-354 (RRSS…QQRG), 362-373 (RRSSTVEQTRQR), 382-393 (RRSSTVEQTQRR), 402-414 (RRSS…QQRG), 422-434 (RRSS…QQRG), and 442-464 (RRSS…SLPE). The segment covering 465–477 (QESHRGSITEGSH) has biased composition (basic and acidic residues). Residues 501-513 (DDSGSAGSRRGSG) are compositionally biased toward low complexity. Positions 564–577 (QELDEDSTPQLEDD) are enriched in acidic residues. Composition is skewed to basic and acidic residues over residues 578–598 (SALK…EEKP) and 638–655 (SKRD…PQHV). Residues 773-808 (RRRILLQAIFEKWDNDGSGFLDLNEVDDLLYTYKEG) form the EF-hand domain. Asp-786, Asp-788, Ser-790, and Glu-797 together coordinate Ca(2+).

The protein is EF-hand calcium-binding domain-containing protein 5 (Efcab5) of Mus musculus (Mouse).